The chain runs to 250 residues: NAD(P)H-quinone oxidoreductase subunit K (250 aa).

4 residues coordinate [4Fe-4S] cluster: cysteine 63, cysteine 64, cysteine 128, and cysteine 159.

Belongs to the complex I 20 kDa subunit family. As to quaternary structure, NDH-1 can be composed of about 15 different subunits; different subcomplexes with different compositions have been identified which probably have different functions. Requires [4Fe-4S] cluster as cofactor.

Its subcellular location is the cellular thylakoid membrane. It carries out the reaction a plastoquinone + NADH + (n+1) H(+)(in) = a plastoquinol + NAD(+) + n H(+)(out). It catalyses the reaction a plastoquinone + NADPH + (n+1) H(+)(in) = a plastoquinol + NADP(+) + n H(+)(out). NDH-1 shuttles electrons from an unknown electron donor, via FMN and iron-sulfur (Fe-S) centers, to quinones in the respiratory and/or the photosynthetic chain. The immediate electron acceptor for the enzyme in this species is believed to be plastoquinone. Couples the redox reaction to proton translocation, and thus conserves the redox energy in a proton gradient. Cyanobacterial NDH-1 also plays a role in inorganic carbon-concentration. The protein is NAD(P)H-quinone oxidoreductase subunit K of Rippkaea orientalis (strain PCC 8801 / RF-1) (Cyanothece sp. (strain PCC 8801)).